We begin with the raw amino-acid sequence, 613 residues long: ATP-dependent RNA helicase DeaD (613 aa).

Residues 5–33 (ITFNDLGLPEFILKAVSDLGFETPSPIQQ) carry the Q motif motif. Positions 36–207 (IPHLLNGNDV…KRFMNDPQEV (172 aa)) constitute a Helicase ATP-binding domain. Position 49–56 (49–56 (AQTGSGKT)) interacts with ATP. The DEAD box motif lies at 155–158 (DEAD). Positions 231-378 (KNEALLRFLE…EVELPNHLVL (148 aa)) constitute a Helicase C-terminal domain. 2 disordered regions span residues 434–476 (ILPP…PQPM) and 552–613 (AVKS…RSSF). 2 stretches are compositionally biased toward basic and acidic residues: residues 440–469 (PMEKRRRERNDRGDRRENPRSAERRGERKG) and 556–613 (DNSR…RSSF).

It belongs to the DEAD box helicase family. DeaD/CsdA subfamily.

It is found in the cytoplasm. It carries out the reaction ATP + H2O = ADP + phosphate + H(+). In terms of biological role, DEAD-box RNA helicase involved in various cellular processes at low temperature, including ribosome biogenesis, mRNA degradation and translation initiation. This Haemophilus influenzae (strain ATCC 51907 / DSM 11121 / KW20 / Rd) protein is ATP-dependent RNA helicase DeaD.